The following is a 157-amino-acid chain: MGIISFIFALAEDMLLAAIPAVGFAMVFNVPQRALRWCALLGAIGHGSRMVMMSAGFNIEWATFLAALLVGSIGIQWSRWYLAHPKIFTVAAVIPMFPGISAYTAMISAVKISHFGYSEEMMILLLSNFLKASSIVGALSIGLSIPGLWLYRKRPRV.

A run of 4 helical transmembrane segments spans residues 2 to 22, 55 to 75, 87 to 107, and 129 to 149; these read GIISFIFALAEDMLLAAIPAV, AGFNIEWATFLAALLVGSIGI, IFTVAAVIPMFPGISAYTAMI, and FLKASSIVGALSIGLSIPGLW.

Belongs to the ThrE exporter (TC 2.A.79) family. As to quaternary structure, the transporter is composed of YjjB and YjjP.

It localises to the cell inner membrane. Its function is as follows. Involved in succinate export with YjjP. Both proteins are required for export. The protein is Probable succinate transporter subunit YjjB of Klebsiella pneumoniae (strain 342).